We begin with the raw amino-acid sequence, 413 residues long: Acyltransferase mokF (413 aa).

R93 is a monacolin J binding site. The active-site Acyl-ester intermediate is S96. The monacolin J site is built by R193, Y208, and Y278. 2-methylbutanoate is bound at residue G386.

It belongs to the class-A beta-lactamase family.

It catalyses the reaction monacolin J carboxylate + (S)-2-methylbutanoyl-[2-methylbutanoate polyketide synthase] = lovastatin carboxylate + holo-[2-methylbutanoate polyketide synthase]. It functions in the pathway polyketide biosynthesis; lovastatin biosynthesis. Acyltransferase; part of the gene cluster that mediates the biosynthesis of monakolin K, also known as lovastatin, and which acts as a potent competitive inhibitor of HMG-CoA reductase. Monakolin K biosynthesis is performed in two stages. The first stage is catalyzed by the nonaketide synthase mokA, which belongs to type I polyketide synthases and catalyzes the iterative nine-step formation of the polyketide. This PKS stage is completed by the action of dehydrogenase mokE, which catalyzes the NADPH-dependent reduction of the unsaturated tetra-, penta- and heptaketide intermediates that arise during the mokA-mediated biosynthesis of the nonaketide chain and leads to dihydromonacolin L. Covalently bound dihydromonacolin L is released from mokA by the mokD esterase. Conversion of dihydromonacolin L into monacolin L and then monacolin J is subsequently performed with the participation of molecular oxygen and P450 monoogygenase mokC. Finally, mokF performs the conversion of monacoline J to monacoline K through the addition of the side-chain diketide moiety (2R)-2-methylbutanoate produced by the diketide synthase mokB. In Monascus pilosus (Red mold), this protein is Acyltransferase mokF.